A 409-amino-acid polypeptide reads, in one-letter code: Elongation factor Tu (409 aa).

The tr-type G domain occupies 10-214 (KPHVNIGTIG…AVDSYIPTPE (205 aa)). Residues 19 to 26 (GHVDHGKT) form a G1 region. GTP is bound at residue 19–26 (GHVDHGKT). T26 is a binding site for Mg(2+). The tract at residues 60–64 (GITIN) is G2. The G3 stretch occupies residues 81–84 (DCPG). GTP contacts are provided by residues 81 to 85 (DCPGH) and 136 to 139 (NKKD). Residues 136-139 (NKKD) are G4. The G5 stretch occupies residues 174-176 (SAK).

Belongs to the TRAFAC class translation factor GTPase superfamily. Classic translation factor GTPase family. EF-Tu/EF-1A subfamily. In terms of assembly, monomer.

It localises to the cytoplasm. The enzyme catalyses GTP + H2O = GDP + phosphate + H(+). In terms of biological role, GTP hydrolase that promotes the GTP-dependent binding of aminoacyl-tRNA to the A-site of ribosomes during protein biosynthesis. The sequence is that of Elongation factor Tu from Microcystis aeruginosa (strain NIES-843 / IAM M-2473).